The primary structure comprises 167 residues: Urease accessory protein UreE (167 aa).

The protein belongs to the UreE family.

It is found in the cytoplasm. In terms of biological role, involved in urease metallocenter assembly. Binds nickel. Probably functions as a nickel donor during metallocenter assembly. The sequence is that of Urease accessory protein UreE from Pseudomonas paraeruginosa (strain DSM 24068 / PA7) (Pseudomonas aeruginosa (strain PA7)).